A 124-amino-acid polypeptide reads, in one-letter code: Alpha-amylase inhibitor 0.19 (124 aa).

5 cysteine pairs are disulfide-bonded: cysteine 6-cysteine 52, cysteine 20-cysteine 41, cysteine 28-cysteine 83, cysteine 42-cysteine 99, and cysteine 54-cysteine 115.

Belongs to the protease inhibitor I6 (cereal trypsin/alpha-amylase inhibitor) family. In terms of assembly, homodimer. The disulfide bonds are essential for the inhibitor activity. In terms of tissue distribution, endosperm.

Its subcellular location is the secreted. Its function is as follows. Alpha-amylase inhibitor. The sequence is that of Alpha-amylase inhibitor 0.19 from Triticum aestivum (Wheat).